The sequence spans 628 residues: Venom redulysin 1 (628 aa).

The first 19 residues, 1–19, serve as a signal peptide directing secretion; that stretch reads MSKLWLLLLLVAAFQAVHS. Residues 20–368 constitute a propeptide that is removed on maturation; the sequence is YPAAESDYLE…EDDVAESDEE (349 aa). The segment at 290–313 is disordered; it reads DYEEEEEEEEEEEFELEEDYEEDP. Positions 291–313 are enriched in acidic residues; that stretch reads YEEEEEEEEEEEFELEEDYEEDP.

This sequence belongs to the redulysin-like family. In terms of processing, contains 5 disulfide bonds. As to expression, expressed by the venom gland (posterior main gland) (at protein level).

The protein localises to the secreted. In terms of biological role, highly abundant protein that may be responsible for the observed disruption of sensory neuron membranes, since it is homologous to proteins such as trialysin, which forms pores in lipid bilayers. Probable insecticidal toxin. The polypeptide is Venom redulysin 1 (Platymeris rhadamanthus (Red spot assassin bug)).